A 147-amino-acid chain; its full sequence is Arginine repressor (147 aa).

Belongs to the ArgR family.

It localises to the cytoplasm. It participates in amino-acid biosynthesis; L-arginine biosynthesis [regulation]. In terms of biological role, regulates arginine biosynthesis genes. This Chlamydia felis (strain Fe/C-56) (Chlamydophila felis) protein is Arginine repressor.